The primary structure comprises 472 residues: MTQFEPVIGLEIHLQLNTNSKLFCSCPSGMADNPIPNSAVCPVCTAQPGTLPVLNKGAVELAVKAALALNLEINKISLFDRKNYFYPDLPKGYQITQLFKPISEHGWLEVNGRKVGITRAHMEEDAGKSIHHASYSLIDWNRAGTPLLEIVSEPEIHSADEAYEFLTKLKSNVSWVGASNADMEKGELRVDVNISLRPAGIKTFGTKVEIKNLNSFKAVRDAINVEIERQTEMLNEGKKIKQETLLFDKEKGETVSMRSKEDALDYRYFPDPDLPPLVLADEWLESVIASRPEMPARRKERFTKDYGLSDYDAGVLTSERALSEYYEDTVKTGANPKNAANWITTDLLGAINAAKLDINDCPVTAKQLGTIVTLTDSGKISRAQAKKVFEQCWQTKKDPEVIVKELGLEQVSDENQLETWAKEAIAENPKIVSDVKSGNPKAIGALIGSVMKKSKGKANPGKMNEIFAKLLQ.

It belongs to the GatB/GatE family. GatB subfamily. Heterotrimer of A, B and C subunits.

It catalyses the reaction L-glutamyl-tRNA(Gln) + L-glutamine + ATP + H2O = L-glutaminyl-tRNA(Gln) + L-glutamate + ADP + phosphate + H(+). The enzyme catalyses L-aspartyl-tRNA(Asn) + L-glutamine + ATP + H2O = L-asparaginyl-tRNA(Asn) + L-glutamate + ADP + phosphate + 2 H(+). Its function is as follows. Allows the formation of correctly charged Asn-tRNA(Asn) or Gln-tRNA(Gln) through the transamidation of misacylated Asp-tRNA(Asn) or Glu-tRNA(Gln) in organisms which lack either or both of asparaginyl-tRNA or glutaminyl-tRNA synthetases. The reaction takes place in the presence of glutamine and ATP through an activated phospho-Asp-tRNA(Asn) or phospho-Glu-tRNA(Gln). This Elusimicrobium minutum (strain Pei191) protein is Aspartyl/glutamyl-tRNA(Asn/Gln) amidotransferase subunit B.